A 426-amino-acid chain; its full sequence is Serine hydroxymethyltransferase 1 (426 aa).

(6S)-5,6,7,8-tetrahydrofolate contacts are provided by residues Leu-118 and 122–124 (GHL). N6-(pyridoxal phosphate)lysine is present on Lys-227.

This sequence belongs to the SHMT family. As to quaternary structure, homodimer. The cofactor is pyridoxal 5'-phosphate.

It localises to the cytoplasm. The catalysed reaction is (6R)-5,10-methylene-5,6,7,8-tetrahydrofolate + glycine + H2O = (6S)-5,6,7,8-tetrahydrofolate + L-serine. It functions in the pathway one-carbon metabolism; tetrahydrofolate interconversion. Its pathway is amino-acid biosynthesis; glycine biosynthesis; glycine from L-serine: step 1/1. Functionally, catalyzes the reversible interconversion of serine and glycine with tetrahydrofolate (THF) serving as the one-carbon carrier. This reaction serves as the major source of one-carbon groups required for the biosynthesis of purines, thymidylate, methionine, and other important biomolecules. Also exhibits THF-independent aldolase activity toward beta-hydroxyamino acids, producing glycine and aldehydes, via a retro-aldol mechanism. The polypeptide is Serine hydroxymethyltransferase 1 (Mycobacterium bovis (strain ATCC BAA-935 / AF2122/97)).